The following is a 269-amino-acid chain: Voltage-gated hydrogen channel 1 (269 aa).

Residues Met1–Arg96 are Cytoplasmic-facing. Thr29 carries the phosphothreonine modification. Residues Glu46–Arg79 form a disordered region. A Phosphoserine modification is found at Ser93. Residues Phe97–Leu117 form a helical membrane-spanning segment. Residues Leu118 to Ala134 lie on the Extracellular side of the membrane. Residues Phe135 to Phe157 traverse the membrane as a helical segment. Topologically, residues Arg158–Lys165 are cytoplasmic. Residues Phe166–Phe186 traverse the membrane as a helical segment. Over Lys187–Ala193 the chain is Extracellular. A helical membrane pass occupies residues Leu194–Ile214. The Cytoplasmic portion of the chain corresponds to Ser215–Asn269. Residues Glu221–Gln261 are a coiled coil.

This sequence belongs to the voltage-gated proton channel (VPC) (TC 1.A.51) family. As to quaternary structure, homodimer; each protomer forms its own proton conduction pathway. In terms of processing, phosphorylated in vitro by PRKCD. Phosphorylation may enhance channel gating. As to expression, enriched in immune tissues, such as bone marrow, macrophages and spleen.

The protein localises to the cell membrane. It is found in the apical cell membrane. It localises to the cytoplasmic vesicle. Its subcellular location is the phagosome membrane. The protein resides in the cell projection. The protein localises to the cilium. It is found in the flagellum membrane. It carries out the reaction H(+)(in) = H(+)(out). With respect to regulation, the dimers display cooperative channel gating. The channel activity is inhibited by zinc ions. Functionally, voltage-gated proton-selective channel that conducts outward proton currents in response to intracellular acidification. Lacks a canonical ion-channel pore domain and mediates proton permeability via its voltage sensor domain. Provides for proton efflux that compensates for electron charge generated by NADPH oxidase activity either in the extracellular or phagosomal compartments, thus enabling the production of high levels of bactericidal reactive oxygen species during the respiratory burst. Opens when the pH of airway surface liquid exceeds 7 and contributes to respiratory epithelial acid secretion to maintain pH in the mucosa. The polypeptide is Voltage-gated hydrogen channel 1 (Mus musculus (Mouse)).